Here is a 111-residue protein sequence, read N- to C-terminus: Universal stress protein B (111 aa).

The next 2 helical transmembrane spans lie at 1–21 (MIST…NMAR) and 90–110 (FILT…LMIW).

It belongs to the universal stress protein B family.

It localises to the cell inner membrane. The chain is Universal stress protein B from Escherichia coli O45:K1 (strain S88 / ExPEC).